The chain runs to 313 residues: Homeobox protein knotted-1-like 2 (313 aa).

The disordered stretch occupies residues 13–40 (DPSSAAASSPNPSFSPGGGGGGGVGGGE). A compositionally biased stretch (low complexity) spans 14-27 (PSSAAASSPNPSFS). Gly residues predominate over residues 28 to 38 (PGGGGGGGVGG). Residues 205–225 (ELKNELKQGYKEKLVDIREEI) enclose the ELK domain. A DNA-binding region (homeobox; TALE-type) is located at residues 226-289 (LRKRRAGKLP…NQRKRNWHSN (64 aa)). The tract at residues 282 to 313 (RKRNWHSNPASSGEKTKKKRNVTGDGGAEQSW) is disordered.

This sequence belongs to the TALE/KNOX homeobox family. Isoform 1 is expressed in roots, leaf blades, leaf sheaths and flowers. Isoform 2 is expressed in leaf blades, leaf sheaths and flowers.

It localises to the nucleus. The sequence is that of Homeobox protein knotted-1-like 2 (HOS58) from Oryza sativa subsp. japonica (Rice).